We begin with the raw amino-acid sequence, 120 residues long: NAD(P)H-quinone oxidoreductase subunit 3, chloroplastic (120 aa).

The next 3 helical transmembrane spans lie at 9-29 (IFWAFLIISSAIPILAFLISG), 64-84 (MFALVFVVFDVETVFLYPWAM), and 88-108 (VLGVSVFIEALIFVLILIVGS).

Belongs to the complex I subunit 3 family. In terms of assembly, NDH is composed of at least 16 different subunits, 5 of which are encoded in the nucleus.

It localises to the plastid. Its subcellular location is the chloroplast thylakoid membrane. The enzyme catalyses a plastoquinone + NADH + (n+1) H(+)(in) = a plastoquinol + NAD(+) + n H(+)(out). The catalysed reaction is a plastoquinone + NADPH + (n+1) H(+)(in) = a plastoquinol + NADP(+) + n H(+)(out). Functionally, NDH shuttles electrons from NAD(P)H:plastoquinone, via FMN and iron-sulfur (Fe-S) centers, to quinones in the photosynthetic chain and possibly in a chloroplast respiratory chain. The immediate electron acceptor for the enzyme in this species is believed to be plastoquinone. Couples the redox reaction to proton translocation, and thus conserves the redox energy in a proton gradient. The sequence is that of NAD(P)H-quinone oxidoreductase subunit 3, chloroplastic from Carica papaya (Papaya).